The following is a 303-amino-acid chain: Elongation factor Ts (303 aa).

Residues 81–84 (TDFV) form an involved in Mg(2+) ion dislocation from EF-Tu region.

This sequence belongs to the EF-Ts family.

The protein resides in the cytoplasm. Associates with the EF-Tu.GDP complex and induces the exchange of GDP to GTP. It remains bound to the aminoacyl-tRNA.EF-Tu.GTP complex up to the GTP hydrolysis stage on the ribosome. This chain is Elongation factor Ts, found in Mesomycoplasma hyopneumoniae (strain 232) (Mycoplasma hyopneumoniae).